Here is a 369-residue protein sequence, read N- to C-terminus: tRNA-specific 2-thiouridylase MnmA (369 aa).

ATP-binding positions include 12–19 and Met-38; that span reads GMSGGVDS. The segment at 98-100 is interaction with target base in tRNA; that stretch reads NPD. Cys-103 acts as the Nucleophile in catalysis. Cys-103 and Cys-200 form a disulfide bridge. Gly-128 is a binding site for ATP. An interaction with tRNA region spans residues 150-152; sequence KDQ. Cys-200 acts as the Cysteine persulfide intermediate in catalysis. Residues 312 to 313 form an interaction with tRNA region; sequence RY.

It belongs to the MnmA/TRMU family.

Its subcellular location is the cytoplasm. It catalyses the reaction S-sulfanyl-L-cysteinyl-[protein] + uridine(34) in tRNA + AH2 + ATP = 2-thiouridine(34) in tRNA + L-cysteinyl-[protein] + A + AMP + diphosphate + H(+). Its function is as follows. Catalyzes the 2-thiolation of uridine at the wobble position (U34) of tRNA, leading to the formation of s(2)U34. The chain is tRNA-specific 2-thiouridylase MnmA from Tolumonas auensis (strain DSM 9187 / NBRC 110442 / TA 4).